The primary structure comprises 277 residues: Ribosomal RNA small subunit methyltransferase A (277 aa).

His-20, Leu-22, Gly-47, Glu-71, Asp-94, and Asn-116 together coordinate S-adenosyl-L-methionine.

It belongs to the class I-like SAM-binding methyltransferase superfamily. rRNA adenine N(6)-methyltransferase family. RsmA subfamily.

It localises to the cytoplasm. The catalysed reaction is adenosine(1518)/adenosine(1519) in 16S rRNA + 4 S-adenosyl-L-methionine = N(6)-dimethyladenosine(1518)/N(6)-dimethyladenosine(1519) in 16S rRNA + 4 S-adenosyl-L-homocysteine + 4 H(+). Its function is as follows. Specifically dimethylates two adjacent adenosines (A1518 and A1519) in the loop of a conserved hairpin near the 3'-end of 16S rRNA in the 30S particle. May play a critical role in biogenesis of 30S subunits. This chain is Ribosomal RNA small subunit methyltransferase A, found in Burkholderia sp.